The following is a 501-amino-acid chain: ATP synthase subunit alpha (501 aa).

169 to 176 contacts ATP; sequence GDRQTGKT.

This sequence belongs to the ATPase alpha/beta chains family. As to quaternary structure, F-type ATPases have 2 components, CF(1) - the catalytic core - and CF(0) - the membrane proton channel. CF(1) has five subunits: alpha(3), beta(3), gamma(1), delta(1), epsilon(1). CF(0) has three main subunits: a(1), b(2) and c(9-12). The alpha and beta chains form an alternating ring which encloses part of the gamma chain. CF(1) is attached to CF(0) by a central stalk formed by the gamma and epsilon chains, while a peripheral stalk is formed by the delta and b chains.

The protein resides in the cell inner membrane. The catalysed reaction is ATP + H2O + 4 H(+)(in) = ADP + phosphate + 5 H(+)(out). Its function is as follows. Produces ATP from ADP in the presence of a proton gradient across the membrane. The alpha chain is a regulatory subunit. This chain is ATP synthase subunit alpha, found in Campylobacter lari (strain RM2100 / D67 / ATCC BAA-1060).